A 172-amino-acid chain; its full sequence is ATP-dependent kinase-like protein notR' (172 aa).

The protein belongs to the YFH7 family.

Functionally, ATP-dependent kinase-like protein; part of the gene cluster that mediates the biosynthesis of notoamide, a fungal indole alkaloid that belongs to a family of natural products containing a characteristic bicyclo[2.2.2]diazaoctane core. The first step of notoamide biosynthesis involves coupling of L-proline and L-tryptophan by the bimodular NRPS notE', to produce cyclo-L-tryptophan-L-proline called brevianamide F. The reverse prenyltransferase notF' then acts as a deoxybrevianamide E synthase and converts brevianamide F to deoxybrevianamide E via reverse prenylation at C-2 of the indole ring leading to the bicyclo[2.2.2]diazaoctane core. Deoxybrevianamide E is further hydroxylated at C-6 of the indole ring, likely catalyzed by the cytochrome P450 monooxygenase notG', to yield 6-hydroxy-deoxybrevianamide E. 6-hydroxy-deoxybrevianamide E is a specific substrate of the prenyltransferase notC' for normal prenylation at C-7 to produce 6-hydroxy-7-prenyl-deoxybrevianamide, also called notoamide S. As the proposed pivotal branching point in notoamide biosynthesis, notoamide S can be diverted to notoamide E through an oxidative pyran ring closure putatively catalyzed by either notH' cytochrome P450 monooxygenase or the notD' FAD-linked oxidoreductase. This step would be followed by an indole 2,3-epoxidation-initiated pinacol-like rearrangement catalyzed by the notB' FAD-dependent monooxygenase leading to the formation of notoamide C and notoamide D. On the other hand notoamide S is converted to notoamide T by notH' (or notD'), a bifunctional oxidase that also functions as the intramolecular Diels-Alderase responsible for generation of (-)-notoamide T. To generate antipodal (+)-notoaminide T, notH (or notD) in Aspergillus strain MF297-2 is expected to catalyze a Diels-Alder reaction leading to the opposite stereochemistry. The remaining oxidoreductase notD' (or notH') likely catalyzes the oxidative pyran ring formation to yield (-)-stephacidin A. The FAD-dependent monooxygenase notI' is highly similar to notB' and is predicted to catalyze a similar conversion from (-)-stephacidin A to (+)-notoamide B via the 2,3-epoxidation of (-)-stephacidin A followed by a pinacol-type rearrangement. Finally, it remains unclear which enzyme could be responsible for the final hydroxylation steps leading to notoamide A and sclerotiamide. The function of notQ' in the notoamide biosynthesis has not been determined yet. The polypeptide is ATP-dependent kinase-like protein notR' (Aspergillus versicolor).